A 2138-amino-acid chain; its full sequence is DNA polymerase epsilon catalytic subunit B (2138 aa).

Positions 1224-1231 (EKRKWKMT) match the Nuclear localization signal 1 motif. Residues Cys2015, Cys2018, Cys2040, and Cys2045 each coordinate Zn(2+). The segment at 2015-2045 (CSNCGAYRDLDFCRDSALLTEKEWSCADPQC) adopts a CysA-type zinc-finger fold. 4 residues coordinate [4Fe-4S] cluster: Cys2076, Cys2079, Cys2091, and Cys2093. The short motif at 2076-2093 (CNRCNQVKAAHLTEQCEC) is the CysB motif element. A Nuclear localization signal 2 motif is present at residues 2107-2114 (HKRIEIFL).

Belongs to the DNA polymerase type-B family. In terms of assembly, heterotetramer. It depends on [4Fe-4S] cluster as a cofactor. In terms of tissue distribution, mostly expressed at low levels in inflorescence (floral meristem and flowers until anthesis), and, to a lower extent, in seeds.

It localises to the nucleus. It carries out the reaction DNA(n) + a 2'-deoxyribonucleoside 5'-triphosphate = DNA(n+1) + diphosphate. Its function is as follows. DNA polymerase II, which participates in chromosomal DNA replication. Involved in the determination of cell fate during plant embryogenesis. Contributes to the flowering time repression. This Arabidopsis thaliana (Mouse-ear cress) protein is DNA polymerase epsilon catalytic subunit B (POL2B).